Here is a 260-residue protein sequence, read N- to C-terminus: Snake venom serine protease 2 (260 aa).

An N-terminal signal peptide occupies residues 1–18 (MVLIRVLANLLILQLFYA). Residues 19 to 24 (QKSSEL) constitute a propeptide that is removed on maturation. Positions 25 to 251 (IIGGDECNIN…HLDWIKSIIA (227 aa)) constitute a Peptidase S1 domain. Intrachain disulfides connect Cys31-Cys165, Cys52-Cys68, Cys100-Cys258, Cys144-Cys212, Cys176-Cys191, and Cys202-Cys227. 2 N-linked (GlcNAc...) asparagine glycosylation sites follow: Asn123 and Asn124.

Belongs to the peptidase S1 family. Snake venom subfamily. As to quaternary structure, monomer. Expressed by the venom gland.

It localises to the secreted. Functionally, snake venom serine protease that may act in the hemostasis system of the prey. The sequence is that of Snake venom serine protease 2 (TLF2) from Protobothrops flavoviridis (Habu).